We begin with the raw amino-acid sequence, 770 residues long: Lysine-specific histone demethylase 1 (770 aa).

The tract at residues 1–21 is disordered; the sequence is MSSDTGSEYLDEEIRGDELGP. Positions 28 to 126 constitute an SWIRM domain; sequence LAAAASAARL…FGRYVRSTKI (99 aa). 137 to 165 lines the FAD pocket; sequence VIVIGAGAAGISAATQLESFGFDVIVLEA. The tract at residues 718–739 is disordered; sequence NEAVADIPNAPNAPNAQKPEEI.

It belongs to the flavin monoamine oxidase family. As to quaternary structure, probably part of a large repressor complex. Interacts with CoREST protein spr-1. Interacts with chromobox protein homolog hpl-1. The cofactor is FAD.

The protein resides in the nucleus. It carries out the reaction N(6),N(6)-dimethyl-L-lysyl(4)-[histone H3] + 2 A + 2 H2O = L-lysyl(4)-[histone H3] + 2 formaldehyde + 2 AH2. Functionally, histone demethylase that specifically demethylates 'Lys-4' of histone H3, a specific tag for epigenetic transcriptional activation, thereby acting as a corepressor. Acts by oxidizing the substrate by FAD to generate the corresponding imine that is subsequently hydrolyzed. Demethylates both mono- and di-methylated 'Lys-4' of histone H3. May be involved in H3 demethylation in mitotic cells including gut and embryonic cells. Participates in the transcriptional repression of the presenilin protein hop-1. May act via the formation of a multiprotein complex that remodel or modify the chromatin. Together with met-2, set-17 and set-26, required for transgenerational fertility. Plays a role in developmental growth and lifespan regulation in response to ultraviolet-induced damage. The chain is Lysine-specific histone demethylase 1 from Caenorhabditis elegans.